We begin with the raw amino-acid sequence, 221 residues long: Protein LURP-one-related 17 (221 aa).

The disordered stretch occupies residues 1–20 (MFPFLKQRSRSVHGEDAPSS).

Belongs to the LOR family.

Its function is as follows. Might be related to the phospholipid scramblase and tubby-like superfamily of membrane tethered transcription factors. The polypeptide is Protein LURP-one-related 17 (Arabidopsis thaliana (Mouse-ear cress)).